Reading from the N-terminus, the 158-residue chain is Small ribosomal subunit protein uS9 (158 aa).

Over residues M1–Q10 the composition is skewed to polar residues. Positions M1 to Y35 are disordered. Positions A21–G32 are enriched in basic and acidic residues.

The protein belongs to the universal ribosomal protein uS9 family.

In Afipia carboxidovorans (strain ATCC 49405 / DSM 1227 / KCTC 32145 / OM5) (Oligotropha carboxidovorans), this protein is Small ribosomal subunit protein uS9.